Reading from the N-terminus, the 353-residue chain is B1 bradykinin receptor (353 aa).

Over 1-41 (MASQTLVVFQASNQSQLPPPNATLCDGAQEAWHLLHKVLPT) the chain is Extracellular. N-linked (GlcNAc...) asparagine glycans are attached at residues Asn-13 and Asn-21. Residues 42-62 (CVVAICSGGLLGNLFVLSVFL) traverse the membrane as a helical segment. The Cytoplasmic portion of the chain corresponds to 63 to 72 (VPRRRLNAAE). Residues 73 to 93 (IYLAHLAASDLVFALGLPFWA) traverse the membrane as a helical segment. The Extracellular portion of the chain corresponds to 94-110 (ETIRNGFHWPFGAPLCR). A disulfide bond links Cys-109 and Cys-189. Residues 111 to 131 (VVNGVIKANLFISIFLVVAIS) form a helical membrane-spanning segment. Residues 132–154 (RDRYRALVHPVASWRRRRRRHWA) are Cytoplasmic-facing. The helical transmembrane segment at 155-175 (QATCVLIWTAGGLLSIPTFLL) threads the bilayer. Topologically, residues 176–207 (RSVQVVPELNVSACVLPFPHEAWAFVRTVELN) are extracellular. Residue Asn-185 is glycosylated (N-linked (GlcNAc...) asparagine). Residues 208–228 (VLGFLLPLAAILFFNYHILAA) traverse the membrane as a helical segment. Topologically, residues 229-251 (LRGREQLSRTRCGGPRDGKTTAL) are cytoplasmic. A helical transmembrane segment spans residues 252–272 (ILTLVAVFLLCWTPYHVCAFL). Over 273–295 (EFLLHVRAIRGCFWEDFTDLGLQ) the chain is Extracellular. A helical transmembrane segment spans residues 296-316 (YTNFFAFINSCLNPVIYVFWG). The Cytoplasmic portion of the chain corresponds to 317 to 353 (QLFRTKIWELYHRCLPRKLTAVSSSRRKEIFQIFWRN). Cys-330 is lipidated: S-palmitoyl cysteine.

It belongs to the G-protein coupled receptor 1 family. Bradykinin receptor subfamily. BDKRB1 sub-subfamily.

Its subcellular location is the cell membrane. This is a receptor for bradykinin. Could be a factor in chronic pain and inflammation. This chain is B1 bradykinin receptor (BDKRB1), found in Sus scrofa (Pig).